The sequence spans 629 residues: Methionine--tRNA ligase (629 aa).

The short motif at 10 to 20 (YYVNSEPHIGS) is the 'HIGH' region element. Zn(2+)-binding residues include C125, C128, C146, and C149. Positions 297–301 (KISKS) match the 'KMSKS' region motif. ATP is bound at residue K300. In terms of domain architecture, tRNA-binding spans 529–629 (DFSKVDLRIA…GEITPGAKVS (101 aa)).

It belongs to the class-I aminoacyl-tRNA synthetase family. MetG type 2A subfamily. In terms of assembly, homodimer. The cofactor is Zn(2+).

It is found in the cytoplasm. It catalyses the reaction tRNA(Met) + L-methionine + ATP = L-methionyl-tRNA(Met) + AMP + diphosphate. Its function is as follows. Is required not only for elongation of protein synthesis but also for the initiation of all mRNA translation through initiator tRNA(fMet) aminoacylation. The polypeptide is Methionine--tRNA ligase (metG) (Thermotoga maritima (strain ATCC 43589 / DSM 3109 / JCM 10099 / NBRC 100826 / MSB8)).